A 249-amino-acid chain; its full sequence is ATP synthase subunit a (249 aa).

The next 5 helical transmembrane spans lie at 33 to 53, 92 to 112, 131 to 151, 196 to 216, and 217 to 237; these read GQVF…SLLA, VPFI…GALI, INTT…AGFS, LVVA…AMIL, and GLFT…SYIG.

The protein belongs to the ATPase A chain family. As to quaternary structure, F-type ATPases have 2 components, CF(1) - the catalytic core - and CF(0) - the membrane proton channel. CF(1) has five subunits: alpha(3), beta(3), gamma(1), delta(1), epsilon(1). CF(0) has four main subunits: a, b, b' and c.

It localises to the cellular thylakoid membrane. Functionally, key component of the proton channel; it plays a direct role in the translocation of protons across the membrane. This is ATP synthase subunit a from Synechococcus elongatus (strain ATCC 33912 / PCC 7942 / FACHB-805) (Anacystis nidulans R2).